The primary structure comprises 219 residues: 2-hydroxy-3-keto-5-methylthiopentenyl-1-phosphate phosphatase (219 aa).

Belongs to the HAD-like hydrolase superfamily. MtnX family.

It carries out the reaction 2-hydroxy-5-methylsulfanyl-3-oxopent-1-enyl phosphate + H2O = 1,2-dihydroxy-5-(methylsulfanyl)pent-1-en-3-one + phosphate. It participates in amino-acid biosynthesis; L-methionine biosynthesis via salvage pathway; L-methionine from S-methyl-5-thio-alpha-D-ribose 1-phosphate: step 4/6. In terms of biological role, dephosphorylates 2-hydroxy-3-keto-5-methylthiopentenyl-1-phosphate (HK-MTPenyl-1-P) yielding 1,2-dihydroxy-3-keto-5-methylthiopentene (DHK-MTPene). This chain is 2-hydroxy-3-keto-5-methylthiopentenyl-1-phosphate phosphatase, found in Bacillus cereus (strain ATCC 14579 / DSM 31 / CCUG 7414 / JCM 2152 / NBRC 15305 / NCIMB 9373 / NCTC 2599 / NRRL B-3711).